We begin with the raw amino-acid sequence, 191 residues long: Octanoyltransferase (191 aa).

Residues 10-185 enclose the BPL/LPL catalytic domain; it reads ENSHDEIWLV…NILALLNNPP (176 aa). Substrate is bound by residues 49–56, 116–118, and 129–131; these read RGGQVTYH, SLG, and GLA. Cysteine 147 acts as the Acyl-thioester intermediate in catalysis.

This sequence belongs to the LipB family.

Its subcellular location is the cytoplasm. It catalyses the reaction octanoyl-[ACP] + L-lysyl-[protein] = N(6)-octanoyl-L-lysyl-[protein] + holo-[ACP] + H(+). It functions in the pathway protein modification; protein lipoylation via endogenous pathway; protein N(6)-(lipoyl)lysine from octanoyl-[acyl-carrier-protein]: step 1/2. Its function is as follows. Catalyzes the transfer of endogenously produced octanoic acid from octanoyl-acyl-carrier-protein onto the lipoyl domains of lipoate-dependent enzymes. Lipoyl-ACP can also act as a substrate although octanoyl-ACP is likely to be the physiological substrate. The sequence is that of Octanoyltransferase from Salmonella choleraesuis (strain SC-B67).